A 285-amino-acid chain; its full sequence is HTH-type transcriptional regulator MurR (285 aa).

One can recognise an HTH rpiR-type domain in the interval 1–77; the sequence is MLYLTKIRNA…MALIGEYSAS (77 aa). Positions 37–56 form a DNA-binding region, H-T-H motif; that stretch reads SRQMAKQLGISQSSIVKFAQ. The SIS domain occupies 128 to 268; sequence IIEVISKAPF…FVGLVQLNDV (141 aa).

As to quaternary structure, homotetramer.

The protein operates within amino-sugar metabolism; N-acetylmuramate degradation [regulation]. Functionally, represses the expression of the murPQ operon involved in the uptake and degradation of N-acetylmuramic acid (MurNAc). Binds to two adjacent inverted repeats within the operator region. MurNAc 6-phosphate, the substrate of MurQ, is the specific inducer that weakens binding of MurR to the operator. This chain is HTH-type transcriptional regulator MurR, found in Escherichia coli (strain ATCC 8739 / DSM 1576 / NBRC 3972 / NCIMB 8545 / WDCM 00012 / Crooks).